The primary structure comprises 1423 residues: DNA-directed RNA polymerase, mitochondrial (1423 aa).

The transit peptide at 1–73 directs the protein to the mitochondrion; sequence MLPRTASATR…RATVGFERHL (73 aa). The disordered stretch occupies residues 266–303; that stretch reads NMPDNVDPDTFAQQQQQQQQQQQQQQEQQQQQDTSIDQ. Residues 278–297 show a composition bias toward low complexity; it reads QQQQQQQQQQQQQQEQQQQQ. Residues aspartate 901 and lysine 970 contribute to the active site. Positions 1055 to 1064 are enriched in basic and acidic residues; the sequence is EFERSERSPH. A disordered region spans residues 1055 to 1087; the sequence is EFERSERSPHGDGTASGENITLAGNPRKSSAHK. The active site involves aspartate 1180. The segment at 1316 to 1342 is disordered; the sequence is VRRGREMDEEGEVDGSEEAVEHEDGMH. A compositionally biased stretch (acidic residues) spans 1322–1336; the sequence is MDEEGEVDGSEEAVE.

The protein belongs to the phage and mitochondrial RNA polymerase family.

It is found in the mitochondrion. The catalysed reaction is RNA(n) + a ribonucleoside 5'-triphosphate = RNA(n+1) + diphosphate. Functionally, DNA-dependent RNA polymerase catalyzes the transcription of DNA into RNA using the four ribonucleoside triphosphates as substrates. The protein is DNA-directed RNA polymerase, mitochondrial (cyt-5) of Neurospora crassa (strain ATCC 24698 / 74-OR23-1A / CBS 708.71 / DSM 1257 / FGSC 987).